Here is a 346-residue protein sequence, read N- to C-terminus: Enkurin domain-containing protein 1 (346 aa).

3 disordered regions span residues 1-24, 88-107, and 113-132; these read MCEG…DYYR, SGVS…NLRR, and RRFQ…PLKA. Ser91 carries the post-translational modification Phosphoserine. Basic and acidic residues-rich tracts occupy residues 98–107 and 113–125; these read KDHEKENLRR and RRFQ…REQG. Ser136 bears the Phosphoserine mark. The Enkurin domain maps to 251 to 343; sequence ERRDLWRKEA…IFSRPKVFVK (93 aa). The segment at 259-280 is disordered; the sequence is EAEARQRSQPDPSMPPGHTLMP.

As to quaternary structure, interacts with alpha-tubulin. Interacts (via central region) with CCP110 (via N-terminal region); competes with CEP97 for binding to CCP110. Widely expressed with highest levels in testis and lung.

It localises to the cytoplasm. The protein resides in the cytoskeleton. It is found in the microtubule organizing center. The protein localises to the centrosome. Its subcellular location is the centriole. It localises to the cilium basal body. The protein resides in the cell projection. It is found in the cilium. The protein localises to the spindle. Its subcellular location is the spindle pole. It localises to the cilium axoneme. Microtubule-binding protein which regulates microtubule organization and stability. Promotes the stability of astral microtubules and facilitates the proper orientation of the mitotic spindle. This allows the oriented division of basal keratinocytes and contributes to epidermal stratification. Required for the assembly of both primary and motile cilia. Destabilizes the interaction between CCP110 and CEP97 by competing with CEP97 for binding to CCP110 which promotes the removal of CCP110 and CEP97 from the mother centriole and allows the initiation of ciliogenesis. In Mus musculus (Mouse), this protein is Enkurin domain-containing protein 1 (Enkd1).